A 584-amino-acid chain; its full sequence is ATP-dependent lipid A-core flippase (584 aa).

Helical transmembrane passes span 18–38 (LWPI…TLIL), 65–85 (VFVW…FSGF), 155–175 (IIGL…ILVL), 252–272 (IFDP…LYAA), and 277–297 (VMEM…IVLM). Residues 30 to 312 (VVASITLILN…LTNVSAQFQR (283 aa)) enclose the ABC transmembrane type-1 domain. Residues 344 to 580 (IIFDDVTFFY…QGIYAQLYKL (237 aa)) enclose the ABC transporter domain. 378 to 385 (GRSGSGKS) serves as a coordination point for ATP.

The protein belongs to the ABC transporter superfamily. Lipid exporter (TC 3.A.1.106) family. Homodimer.

It is found in the cell inner membrane. The enzyme catalyses ATP + H2O + lipid A-core oligosaccharideSide 1 = ADP + phosphate + lipid A-core oligosaccharideSide 2.. In terms of biological role, involved in lipopolysaccharide (LPS) biosynthesis. Translocates lipid A-core from the inner to the outer leaflet of the inner membrane. Transmembrane domains (TMD) form a pore in the inner membrane and the ATP-binding domain (NBD) is responsible for energy generation. This is ATP-dependent lipid A-core flippase from Blochmanniella pennsylvanica (strain BPEN).